The following is a 328-amino-acid chain: Malate dehydrogenase (328 aa).

11-17 (GAAGQIG) lines the NAD(+) pocket. Substrate-binding residues include Arg-94 and Arg-100. Residues Asn-107, Gln-114, and 131–133 (VGN) contribute to the NAD(+) site. The substrate site is built by Asn-133 and Arg-164. The Proton acceptor role is filled by His-189.

It belongs to the LDH/MDH superfamily. MDH type 2 family.

It catalyses the reaction (S)-malate + NAD(+) = oxaloacetate + NADH + H(+). In terms of biological role, catalyzes the reversible oxidation of malate to oxaloacetate. This is Malate dehydrogenase from Xanthomonas oryzae pv. oryzae (strain PXO99A).